The following is a 1166-amino-acid chain: DNA-directed RNA polymerase subunit beta (1166 aa).

This sequence belongs to the RNA polymerase beta chain family. In terms of assembly, the RNAP catalytic core consists of 2 alpha, 1 beta, 1 beta' and 1 omega subunit. When a sigma factor is associated with the core the holoenzyme is formed, which can initiate transcription.

The catalysed reaction is RNA(n) + a ribonucleoside 5'-triphosphate = RNA(n+1) + diphosphate. In terms of biological role, DNA-dependent RNA polymerase catalyzes the transcription of DNA into RNA using the four ribonucleoside triphosphates as substrates. The sequence is that of DNA-directed RNA polymerase subunit beta from Nocardioides sp. (strain ATCC BAA-499 / JS614).